Here is a 196-residue protein sequence, read N- to C-terminus: Holliday junction branch migration complex subunit RuvA (196 aa).

The tract at residues 1–63 is domain I; it reads MINKIYGKIV…DDDVKLFGFL (63 aa). The tract at residues 64–142 is domain II; it reads NISEREVFED…KGDESSSYML (79 aa). Lys-143 is a region of interest (flexible linker). Residues 143 to 196 are domain III; sequence KFKELEQSIVNMGFDRKLVVVAFREIMLSDKFLILKEAEQEQFLFTETLKRLSV.

Belongs to the RuvA family. In terms of assembly, homotetramer. Forms an RuvA(8)-RuvB(12)-Holliday junction (HJ) complex. HJ DNA is sandwiched between 2 RuvA tetramers; dsDNA enters through RuvA and exits via RuvB. An RuvB hexamer assembles on each DNA strand where it exits the tetramer. Each RuvB hexamer is contacted by two RuvA subunits (via domain III) on 2 adjacent RuvB subunits; this complex drives branch migration. In the full resolvosome a probable DNA-RuvA(4)-RuvB(12)-RuvC(2) complex forms which resolves the HJ.

It localises to the cytoplasm. The RuvA-RuvB-RuvC complex processes Holliday junction (HJ) DNA during genetic recombination and DNA repair, while the RuvA-RuvB complex plays an important role in the rescue of blocked DNA replication forks via replication fork reversal (RFR). RuvA specifically binds to HJ cruciform DNA, conferring on it an open structure. The RuvB hexamer acts as an ATP-dependent pump, pulling dsDNA into and through the RuvAB complex. HJ branch migration allows RuvC to scan DNA until it finds its consensus sequence, where it cleaves and resolves the cruciform DNA. This is Holliday junction branch migration complex subunit RuvA from Borrelia duttonii (strain Ly).